The sequence spans 1691 residues: Collagen alpha-6(IV) chain (1691 aa).

Positions 1–22 (MLINKLWLLLVTLCLTEELAAA) are cleaved as a signal peptide. Positions 23–46 (GEKSYGKPCGGQDCSGSCQCFPEK) are 7S domain. Positions 47–1463 (GARGRPGPIG…FGMPGMPGQS (1417 aa)) are triple-helical region. Disordered stretches follow at residues 108–338 (IPGH…EGQK), 404–473 (GFPG…LGLK), 486–881 (GGVP…KGSP), 915–1099 (GIPG…KGRD), and 1185–1459 (THGT…MPGM). An N-linked (GlcNAc...) asparagine glycan is attached at Asn127. Positions 185-197 (PQGAPGFPGAVGP) are enriched in low complexity. A compositionally biased stretch (pro residues) spans 198–213 (AGPPGLQGPPGPPGPL). Low complexity-rich tracts occupy residues 311 to 320 (QGPPGQQGKK) and 421 to 431 (GAAGLPGRDGL). Composition is skewed to pro residues over residues 432-443 (PGPPGPPGPPSP) and 491-502 (TGPPGEPGPPGP). The span at 503–512 (WGLIGLPGLK) shows a compositional bias: low complexity. The Cell attachment site motif lies at 515 to 517 (RGD). Residues 526-541 (PAGAPGLVGPLGPSGP) show a composition bias toward low complexity. A Cell attachment site motif is present at residues 560–562 (RGD). A compositionally biased stretch (gly residues) spans 588-599 (GLPGDGGQGFPG). Composition is skewed to low complexity over residues 641 to 652 (LPGQQGLPGSKG), 660 to 703 (PGSY…GSPG), 722 to 735 (LPGF…DGLP), and 802 to 820 (SPGT…SSGP). Positions 842–851 (PGKKGTRGKK) are enriched in basic residues. Low complexity predominate over residues 853–878 (PPGSIVKKGLPGLKGLPGNPGLVGLK). Residues 986 to 988 (RGD) carry the Cell attachment site motif. A compositionally biased stretch (low complexity) spans 1055 to 1068 (SPGLPGASGLPGLK). Positions 1210 to 1220 (GYPGIGIGAPG) are enriched in gly residues. The span at 1234 to 1253 (PGLQGPAGLPGAPGISLPSL) shows a compositional bias: low complexity. Residues 1275-1284 (PAGPPGPPGP) show a composition bias toward pro residues. A compositionally biased stretch (polar residues) spans 1360–1371 (SGLQGDPGQTPT). Low complexity-rich tracts occupy residues 1384–1397 (LPGI…TGDP) and 1429–1459 (ALGD…MPGM). The Collagen IV NC1 domain maps to 1467-1691 (GYTLVKHSQS…SRCQVCMKSL (225 aa)). Intrachain disulfides connect Cys1482–Cys1571, Cys1515–Cys1568, Cys1527–Cys1533, Cys1590–Cys1687, Cys1624–Cys1684, and Cys1636–Cys1643.

It belongs to the type IV collagen family. There are six type IV collagen isoforms, alpha 1(IV)-alpha 6(IV), each of which can form a triple helix structure with 2 other chains to generate type IV collagen network. Prolines at the third position of the tripeptide repeating unit (G-X-Y) are hydroxylated in some or all of the chains. In terms of processing, type IV collagens contain numerous cysteine residues which are involved in inter- and intramolecular disulfide bonding. 12 of these, located in the NC1 domain, are conserved in all known type IV collagens. Post-translationally, the trimeric structure of the NC1 domains is stabilized by covalent bonds between Lys and Met residues.

The protein resides in the secreted. Its subcellular location is the extracellular space. It is found in the extracellular matrix. It localises to the basement membrane. In terms of biological role, type IV collagen is the major structural component of glomerular basement membranes (GBM), forming a 'chicken-wire' meshwork together with laminins, proteoglycans and entactin/nidogen. This Homo sapiens (Human) protein is Collagen alpha-6(IV) chain (COL4A6).